Consider the following 276-residue polypeptide: NAD kinase (276 aa).

Residue Asp-61 is the Proton acceptor of the active site. NAD(+)-binding positions include 61 to 62, 134 to 135, Arg-145, Lys-162, Asp-164, Val-172, 175 to 180, and Gln-234; these read DG, ND, and TAYSFS.

This sequence belongs to the NAD kinase family. The cofactor is a divalent metal cation.

The protein resides in the cytoplasm. It catalyses the reaction NAD(+) + ATP = ADP + NADP(+) + H(+). Functionally, involved in the regulation of the intracellular balance of NAD and NADP, and is a key enzyme in the biosynthesis of NADP. Catalyzes specifically the phosphorylation on 2'-hydroxyl of the adenosine moiety of NAD to yield NADP. In Clostridium perfringens (strain ATCC 13124 / DSM 756 / JCM 1290 / NCIMB 6125 / NCTC 8237 / Type A), this protein is NAD kinase.